A 221-amino-acid polypeptide reads, in one-letter code: MENNDDLMPREKLLASGAKALSDYELLAIFLRTGIKGCPVISLSKNVLTHFGSLHALLSSDKKAFCSVKGLGITQFIQLQAITEMTKRYLKQEMLSTPIINDPETVKLFLLTELQHEEREVFMVLFLDNQHRLIKKERLFLGTINVSAVYPREIIKEALYCNAAALILAHNHPSGVTEPSYSDQLITKKIQDAAELMEICVLDHLIVGKSDCYSFAENCLL.

In terms of domain architecture, MPN spans Ile-99–Leu-221. Zn(2+) is bound by residues His-170, His-172, and Asp-183. The short motif at His-170–Asp-183 is the JAMM motif element.

It belongs to the UPF0758 family.

This is UPF0758 protein CGSHiEE_07200 from Haemophilus influenzae (strain PittEE).